A 232-amino-acid polypeptide reads, in one-letter code: Triosephosphate isomerase (232 aa).

A substrate-binding site is contributed by 6–8 (NFK). The Electrophile role is filled by H86. The active-site Proton acceptor is E155. G161 and S191 together coordinate substrate.

The protein belongs to the triosephosphate isomerase family. As to quaternary structure, homodimer.

It localises to the cytoplasm. It catalyses the reaction D-glyceraldehyde 3-phosphate = dihydroxyacetone phosphate. It functions in the pathway carbohydrate biosynthesis; gluconeogenesis. The protein operates within carbohydrate degradation; glycolysis; D-glyceraldehyde 3-phosphate from glycerone phosphate: step 1/1. Its function is as follows. Involved in the gluconeogenesis. Catalyzes stereospecifically the conversion of dihydroxyacetone phosphate (DHAP) to D-glyceraldehyde-3-phosphate (G3P). This is Triosephosphate isomerase from Nitratiruptor sp. (strain SB155-2).